A 290-amino-acid polypeptide reads, in one-letter code: Secreted chorismate mutase (290 aa).

The signal sequence occupies residues 1 to 21 (MKLSVSIFVLLAVSAFGGGSA). Residues 117 to 140 (VVLSRDTVLDKPVVGKGIFPIGRR) are KWL1-binding extensive loop region (ELR). 2 N-linked (GlcNAc...) asparagine glycosylation sites follow: Asn-159 and Asn-208.

As to quaternary structure, homodimer. Forms a heterodimer with the host cytosolic chorismate mutase CM2. Interacts with the host kiwellin KWL1 which acts as a defense protein that protects maize from infection.

It is found in the secreted. It localises to the host cytoplasm. The protein resides in the host cytosol. It carries out the reaction chorismate = prephenate. With respect to regulation, contrary to classical chorismate mutases, CMU1 is not subject to allosteric regulation by tryptophan and tyrosine. Activity is decreased in a non-competitive and allosteric manner by the binding of the host defense kiwellin KWL1 which probably blocks substrate access to the active site of CMU1. In terms of biological role, secreted chorismate mutase that is one component of a cocktail of effectors shaping the host metabolome and acting as virulence factors. The enzyme is taken up by plant cells, can spread to neighboring cells where it affects the biosynthesis of the plant immune signal salicylic acid by channelling chorismate into the phenylpropanoid pathway. Interferes with the activity of host cytosolic chorismate mutase CM2 through heterodimerization. This is Secreted chorismate mutase (CMU1) from Mycosarcoma maydis (Corn smut fungus).